We begin with the raw amino-acid sequence, 308 residues long: Protoheme IX farnesyltransferase (308 aa).

8 helical membrane passes run 31–51 (VIEL…RGTV), 53–73 (PLLI…ANTL), 102–122 (HALI…WLST), 124–144 (LLSG…YTML), 149–169 (TSQN…IGWS), 170–190 (AVTG…FFWT), 242–262 (LATG…FLVM), and 288–308 (YLAV…PTLL).

The protein belongs to the UbiA prenyltransferase family. Protoheme IX farnesyltransferase subfamily.

It is found in the cell membrane. It catalyses the reaction heme b + (2E,6E)-farnesyl diphosphate + H2O = Fe(II)-heme o + diphosphate. It functions in the pathway porphyrin-containing compound metabolism; heme O biosynthesis; heme O from protoheme: step 1/1. In terms of biological role, converts heme B (protoheme IX) to heme O by substitution of the vinyl group on carbon 2 of heme B porphyrin ring with a hydroxyethyl farnesyl side group. The sequence is that of Protoheme IX farnesyltransferase from Mycolicibacterium smegmatis (strain ATCC 700084 / mc(2)155) (Mycobacterium smegmatis).